The chain runs to 144 residues: Nucleoside diphosphate kinase (144 aa).

ATP-binding residues include Lys-11, Phe-59, Arg-87, Thr-93, Arg-104, and Asn-114. His-117 acts as the Pros-phosphohistidine intermediate in catalysis.

It belongs to the NDK family. Homotetramer. Requires Mg(2+) as cofactor.

It localises to the cytoplasm. The catalysed reaction is a 2'-deoxyribonucleoside 5'-diphosphate + ATP = a 2'-deoxyribonucleoside 5'-triphosphate + ADP. It catalyses the reaction a ribonucleoside 5'-diphosphate + ATP = a ribonucleoside 5'-triphosphate + ADP. In terms of biological role, major role in the synthesis of nucleoside triphosphates other than ATP. The ATP gamma phosphate is transferred to the NDP beta phosphate via a ping-pong mechanism, using a phosphorylated active-site intermediate. In Aliivibrio fischeri (strain MJ11) (Vibrio fischeri), this protein is Nucleoside diphosphate kinase.